The sequence spans 225 residues: Probable manganese catalase (225 aa).

Glu37 is a binding site for Mn(2+). Ca(2+) is bound by residues Asp58 and Asp62. Residues Glu67, His70, Glu138, and His171 each contribute to the Mn(2+) site. Ser204 lines the Ca(2+) pocket. A disordered region spans residues 204–225; the sequence is STPGRYVQDPNPTEPSFSNPRR. Positions 213–225 are enriched in polar residues; the sequence is PNPTEPSFSNPRR.

This sequence belongs to the manganese catalase family. It depends on Ca(2+) as a cofactor. Requires Mn(2+) as cofactor.

It catalyses the reaction 2 H2O2 = O2 + 2 H2O. Catalyzes the decomposition of hydrogen peroxide into water and oxygen. This chain is Probable manganese catalase, found in Clostridium acetobutylicum (strain ATCC 824 / DSM 792 / JCM 1419 / IAM 19013 / LMG 5710 / NBRC 13948 / NRRL B-527 / VKM B-1787 / 2291 / W).